The following is a 136-amino-acid chain: Small ribosomal subunit protein uS9 (136 aa).

Over residues 103 to 116 the composition is skewed to basic and acidic residues; the sequence is PLKTEGHLSRDPRA. The tract at residues 103–136 is disordered; sequence PLKTEGHLSRDPRAKERRKYGLKKARKAPQFSKR. The span at 117–136 shows a compositional bias: basic residues; sequence KERRKYGLKKARKAPQFSKR.

The protein belongs to the universal ribosomal protein uS9 family.

This chain is Small ribosomal subunit protein uS9 (rpsI), found in Prochlorococcus marinus (strain SARG / CCMP1375 / SS120).